A 195-amino-acid chain; its full sequence is Probable septum site-determining protein MinC (195 aa).

The protein belongs to the MinC family. As to quaternary structure, interacts with MinD and FtsZ.

Its function is as follows. Cell division inhibitor that blocks the formation of polar Z ring septums. Rapidly oscillates between the poles of the cell to destabilize FtsZ filaments that have formed before they mature into polar Z rings. Prevents FtsZ polymerization. This Helicobacter pylori (strain P12) protein is Probable septum site-determining protein MinC.